The following is a 301-amino-acid chain: Pantothenate synthetase (301 aa).

30 to 37 (MGNLHEGH) is a binding site for ATP. His37 (proton donor) is an active-site residue. A (R)-pantoate-binding site is contributed by Gln61. Gln61 serves as a coordination point for beta-alanine. ATP is bound at residue 149-152 (GEKD). A (R)-pantoate-binding site is contributed by Gln155. ATP-binding positions include Val178 and 186–189 (MSSR).

It belongs to the pantothenate synthetase family. Homodimer.

It localises to the cytoplasm. It carries out the reaction (R)-pantoate + beta-alanine + ATP = (R)-pantothenate + AMP + diphosphate + H(+). It participates in cofactor biosynthesis; (R)-pantothenate biosynthesis; (R)-pantothenate from (R)-pantoate and beta-alanine: step 1/1. In terms of biological role, catalyzes the condensation of pantoate with beta-alanine in an ATP-dependent reaction via a pantoyl-adenylate intermediate. The protein is Pantothenate synthetase of Vibrio vulnificus (strain YJ016).